We begin with the raw amino-acid sequence, 253 residues long: Ubiquinone/menaquinone biosynthesis C-methyltransferase UbiE (253 aa).

Residues Thr76, Asp97, 125–126 (NA), and Ser142 each bind S-adenosyl-L-methionine.

It belongs to the class I-like SAM-binding methyltransferase superfamily. MenG/UbiE family.

It catalyses the reaction a 2-demethylmenaquinol + S-adenosyl-L-methionine = a menaquinol + S-adenosyl-L-homocysteine + H(+). The enzyme catalyses a 2-methoxy-6-(all-trans-polyprenyl)benzene-1,4-diol + S-adenosyl-L-methionine = a 5-methoxy-2-methyl-3-(all-trans-polyprenyl)benzene-1,4-diol + S-adenosyl-L-homocysteine + H(+). It participates in quinol/quinone metabolism; menaquinone biosynthesis; menaquinol from 1,4-dihydroxy-2-naphthoate: step 2/2. The protein operates within cofactor biosynthesis; ubiquinone biosynthesis. Functionally, methyltransferase required for the conversion of demethylmenaquinol (DMKH2) to menaquinol (MKH2) and the conversion of 2-polyprenyl-6-methoxy-1,4-benzoquinol (DDMQH2) to 2-polyprenyl-3-methyl-6-methoxy-1,4-benzoquinol (DMQH2). The chain is Ubiquinone/menaquinone biosynthesis C-methyltransferase UbiE from Xylella fastidiosa (strain M23).